A 128-amino-acid chain; its full sequence is Glycine cleavage system H protein (128 aa).

The Lipoyl-binding domain occupies valine 24 to lysine 106. An N6-lipoyllysine modification is found at lysine 65.

This sequence belongs to the GcvH family. The glycine cleavage system is composed of four proteins: P, T, L and H. It depends on (R)-lipoate as a cofactor.

Functionally, the glycine cleavage system catalyzes the degradation of glycine. The H protein shuttles the methylamine group of glycine from the P protein to the T protein. The chain is Glycine cleavage system H protein from Yersinia pseudotuberculosis serotype O:1b (strain IP 31758).